Consider the following 339-residue polypeptide: 2-deoxy-scyllo-inosamine dehydrogenase (339 aa).

Zn(2+)-binding residues include Cys-37, His-59, Cys-88, Cys-91, Cys-94, Cys-102, and Glu-143.

This sequence belongs to the zinc-containing alcohol dehydrogenase family. DOIA dehydrogenase subfamily. Zn(2+) is required as a cofactor.

It carries out the reaction 2-deoxy-scyllo-inosamine + NADP(+) = 3-amino-2,3-dideoxy-scyllo-inosose + NADPH + H(+). The catalysed reaction is 2-deoxy-scyllo-inosamine + NAD(+) = 3-amino-2,3-dideoxy-scyllo-inosose + NADH + H(+). It participates in metabolic intermediate biosynthesis; 2-deoxystreptamine biosynthesis; 2-deoxystreptamine from D-glucose 6-phosphate: step 3/4. It functions in the pathway antibiotic biosynthesis; paromomycin biosynthesis. Catalyzes the oxidation of 2-deoxy-scyllo-inosamine (DOIA) with NAD(+) or NADP(+), forming 3-amino-2,3-dideoxy-scyllo-inosose (amino-DOI). This chain is 2-deoxy-scyllo-inosamine dehydrogenase (parE), found in Streptomyces paromomycinus (Streptomyces rimosus subsp. paromomycinus).